Consider the following 391-residue polypeptide: Elongation factor Tu 2 (391 aa).

One can recognise a tr-type G domain in the interval 10-201 (KPHVNIGTIG…EVDNYIPTPE (192 aa)). A G1 region spans residues 19-26 (GHVDHGKT). 19 to 26 (GHVDHGKT) lines the GTP pocket. T26 contributes to the Mg(2+) binding site. Residues 55–59 (GITIS) are G2. The interval 76 to 79 (DCPG) is G3. Residues 76-80 (DCPGH) and 131-134 (NKVD) contribute to the GTP site. The segment at 131-134 (NKVD) is G4. The segment at 169–171 (SAL) is G5.

This sequence belongs to the TRAFAC class translation factor GTPase superfamily. Classic translation factor GTPase family. EF-Tu/EF-1A subfamily. As to quaternary structure, monomer.

It is found in the cytoplasm. The enzyme catalyses GTP + H2O = GDP + phosphate + H(+). Its function is as follows. GTP hydrolase that promotes the GTP-dependent binding of aminoacyl-tRNA to the A-site of ribosomes during protein biosynthesis. The chain is Elongation factor Tu 2 from Bartonella quintana (strain Toulouse) (Rochalimaea quintana).